The chain runs to 133 residues: Small ribosomal subunit protein uS8 (133 aa).

It belongs to the universal ribosomal protein uS8 family. Part of the 30S ribosomal subunit. Contacts proteins S5 and S12.

One of the primary rRNA binding proteins, it binds directly to 16S rRNA central domain where it helps coordinate assembly of the platform of the 30S subunit. In Oenococcus oeni (strain ATCC BAA-331 / PSU-1), this protein is Small ribosomal subunit protein uS8.